Reading from the N-terminus, the 251-residue chain is MyoD family inhibitor (251 aa).

3 disordered regions span residues 1-64 (MSQV…PHDS), 84-167 (VTCQ…APAV), and 230-251 (RPKQ…GKEF). A compositionally biased stretch (polar residues) spans 84–94 (VTCQPQGNPQG). A compositionally biased stretch (low complexity) spans 138-154 (GSQAGRKSRGSARSASQ).

It belongs to the MDFI family. Interacts (via C-terminus) with AXIN1 and LEF1. Interacts with CCNT2. Interacts (via C-terminus) with Piezo channel composed of PIEZO1 or PIEZO2; the interaction prolongs Piezo channel inactivation. In the embryo, highly expressed in the sclerotome. Also expressed in the notochord, neural tube, limb buds, heart, branchial arches and head mesenchyme. In the adult, highly expressed in skeletal muscle. Expressed at lower levels in most other tissues.

The protein resides in the nucleus. Its subcellular location is the cytoplasm. Functionally, inhibits the transactivation activity of the Myod family of myogenic factors and represses myogenesis. Acts by associating with Myod family members and retaining them in the cytoplasm by masking their nuclear localization signals. Can also interfere with the DNA-binding activity of Myod family members. Plays an important role in trophoblast and chondrogenic differentiation. Regulates the transcriptional activity of TCF7L1/TCF3 by interacting directly with Tcf7l1/Tcf3 and preventing it from binding DNA. Binds to the axin complex, resulting in an increase in the level of free beta-catenin. Affects axin regulation of the WNT and JNK signaling pathways. Regulates the activity of mechanosensitive Piezo channel. This Mus musculus (Mouse) protein is MyoD family inhibitor (Mdfi).